Here is a 347-residue protein sequence, read N- to C-terminus: NADH-ubiquinone oxidoreductase chain 2 (347 aa).

10 helical membrane-spanning segments follow: residues 13 to 33 (IFAGTFITVLSSHWFFTWVGL), 55 to 75 (AAIKYFLTQATASMILLMAIL), 96 to 116 (LMIMTAMAMKLGMAPFHFWVP), 123 to 143 (PLMSGLLLLTWQKLAPISIMY), 149 to 169 (LNVNLLLTLSILSIMAGSWGG), 178 to 198 (ILAYSSITHMGWMMAVLPYNP), 201 to 221 (TILNLTIYIILTTTTFLLLNL), 247 to 267 (TLLSLGGLPPLTGFLPKWVII), 274 to 294 (NSLIIPTTMAIITLLNLYFYL), and 326 to 346 (LPTLITLTTLLLPISPFMLMI).

This sequence belongs to the complex I subunit 2 family. As to quaternary structure, core subunit of respiratory chain NADH dehydrogenase (Complex I) which is composed of 45 different subunits. Interacts with TMEM242.

Its subcellular location is the mitochondrion inner membrane. It carries out the reaction a ubiquinone + NADH + 5 H(+)(in) = a ubiquinol + NAD(+) + 4 H(+)(out). Its function is as follows. Core subunit of the mitochondrial membrane respiratory chain NADH dehydrogenase (Complex I) which catalyzes electron transfer from NADH through the respiratory chain, using ubiquinone as an electron acceptor. Essential for the catalytic activity and assembly of complex I. The polypeptide is NADH-ubiquinone oxidoreductase chain 2 (Pan paniscus (Pygmy chimpanzee)).